The primary structure comprises 318 residues: Adenylate isopentenyltransferase 4 (318 aa).

12–19 (GATGSGKS) is a binding site for ATP.

Belongs to the IPP transferase family. Mg(2+) serves as cofactor. In terms of tissue distribution, expressed in immature seeds with highest expression in the chalazal endosperm.

The protein localises to the cytoplasm. It carries out the reaction dimethylallyl diphosphate + ADP = N(6)-(dimethylallyl)adenosine 5'-diphosphate + diphosphate. The enzyme catalyses dimethylallyl diphosphate + ATP = N(6)-(dimethylallyl)adenosine 5'-triphosphate + diphosphate. In terms of biological role, involved in cytokinin biosynthesis. Catalyzes the transfer of an isopentenyl group from dimethylallyl diphosphate (DMAPP) to ATP and ADP, but not to AMP. Has no DMAPP:tRNA isopentenyltransferase activity. The protein is Adenylate isopentenyltransferase 4 (IPT4) of Arabidopsis thaliana (Mouse-ear cress).